Here is a 204-residue protein sequence, read N- to C-terminus: Recombination protein RecR (204 aa).

Residues 58–75 (CSVCQNITDVGVDPCALC) form a C4-type zinc finger. The 99-residue stretch at 83–181 (SVICVVESPV…HVTKIARGIP (99 aa)) folds into the Toprim domain.

This sequence belongs to the RecR family.

Its function is as follows. May play a role in DNA repair. It seems to be involved in an RecBC-independent recombinational process of DNA repair. It may act with RecF and RecO. The polypeptide is Recombination protein RecR (Pelodictyon phaeoclathratiforme (strain DSM 5477 / BU-1)).